The following is a 701-amino-acid chain: Type 3 secretion system secretin (701 aa).

The N-terminal stretch at 1–21 (MRKALMWLPLLLIGLSPATWA) is a signal peptide. Residues 229–238 (RGNGLAGGGS) show a composition bias toward gly residues. A disordered region spans residues 229-252 (RGNGLAGGGSPDTPSLPMSSSGLD). Residues 240–252 (DTPSLPMSSSGLD) show a composition bias toward polar residues.

It belongs to the bacterial secretin family. T3SS SctC subfamily. As to quaternary structure, the core secretion machinery of the T3SS is composed of approximately 20 different proteins, including cytoplasmic components, a base, an export apparatus and a needle. This subunit is part of the base, which anchors the injectisome in the bacterial cell envelope. Forms a stable homooligomeric complex.

It localises to the cell outer membrane. Its function is as follows. Component of the type III secretion system (T3SS), also called injectisome, which is used to inject bacterial effector proteins into eukaryotic host cells. Forms a ring-shaped multimeric structure with an apparent central pore in the outer membrane. Involved in the secretion of a proteinaceous elicitor of the hypersensitivity response in plants. In Pseudomonas syringae pv. syringae, this protein is Type 3 secretion system secretin.